A 130-amino-acid polypeptide reads, in one-letter code: Small ribosomal subunit protein uS8 (130 aa).

Belongs to the universal ribosomal protein uS8 family. Part of the 30S ribosomal subunit. Contacts proteins S5 and S12.

Its function is as follows. One of the primary rRNA binding proteins, it binds directly to 16S rRNA central domain where it helps coordinate assembly of the platform of the 30S subunit. The polypeptide is Small ribosomal subunit protein uS8 (Erwinia tasmaniensis (strain DSM 17950 / CFBP 7177 / CIP 109463 / NCPPB 4357 / Et1/99)).